The chain runs to 345 residues: N-acetyl-gamma-glutamyl-phosphate reductase (345 aa).

The active site involves cysteine 149.

The protein belongs to the NAGSA dehydrogenase family. Type 1 subfamily.

It is found in the cytoplasm. It carries out the reaction N-acetyl-L-glutamate 5-semialdehyde + phosphate + NADP(+) = N-acetyl-L-glutamyl 5-phosphate + NADPH + H(+). The protein operates within amino-acid biosynthesis; L-arginine biosynthesis; N(2)-acetyl-L-ornithine from L-glutamate: step 3/4. In terms of biological role, catalyzes the NADPH-dependent reduction of N-acetyl-5-glutamyl phosphate to yield N-acetyl-L-glutamate 5-semialdehyde. This is N-acetyl-gamma-glutamyl-phosphate reductase from Bacillus subtilis (strain 168).